The chain runs to 1028 residues: Carbamoyl phosphate synthase large chain (1028 aa).

The tract at residues 1–409 is carboxyphosphate synthetic domain; that stretch reads MPPRRDLKKI…ALMKALRGLE (409 aa). Arg129, Arg169, Gly175, Gly176, Glu208, Val210, Glu215, Gly241, Val242, His243, Gln285, and Glu299 together coordinate ATP. Positions 133–328 constitute an ATP-grasp 1 domain; the sequence is QEAMQRIGLE…IAKIAALLAV (196 aa). Mg(2+) is bound by residues Gln285, Glu299, and Asn301. Mn(2+) is bound by residues Gln285, Glu299, and Asn301. An oligomerization domain region spans residues 410 to 549; the sequence is RDVRALAGVR…YSTYELEDEV (140 aa). Residues 550–933 are carbamoyl phosphate synthetic domain; sequence WPSQKPKVVI…AYYKAELGAG (384 aa). Residues 674–866 form the ATP-grasp 2 domain; the sequence is HALCQRLGIP…LAKLAALIAV (193 aa). ATP-binding residues include Arg710, Arg750, Leu752, Glu757, Gly782, Val783, His784, Ser785, Gln825, and Glu837. Mg(2+)-binding residues include Gln825, Glu837, and Asn839. The Mn(2+) site is built by Gln825, Glu837, and Asn839. Residues 934 to 1028 enclose the MGS-like domain; it reads QRLPLSGRVR…QDWHQKAPRG (95 aa). The segment at 934 to 1028 is allosteric domain; sequence QRLPLSGRVR…QDWHQKAPRG (95 aa).

The protein belongs to the CarB family. As to quaternary structure, composed of two chains; the small (or glutamine) chain promotes the hydrolysis of glutamine to ammonia, which is used by the large (or ammonia) chain to synthesize carbamoyl phosphate. Tetramer of heterodimers (alpha,beta)4. Mg(2+) serves as cofactor. The cofactor is Mn(2+).

The enzyme catalyses hydrogencarbonate + L-glutamine + 2 ATP + H2O = carbamoyl phosphate + L-glutamate + 2 ADP + phosphate + 2 H(+). It carries out the reaction hydrogencarbonate + NH4(+) + 2 ATP = carbamoyl phosphate + 2 ADP + phosphate + 2 H(+). The protein operates within amino-acid biosynthesis; L-arginine biosynthesis; carbamoyl phosphate from bicarbonate: step 1/1. Its pathway is pyrimidine metabolism; UMP biosynthesis via de novo pathway; (S)-dihydroorotate from bicarbonate: step 1/3. Large subunit of the glutamine-dependent carbamoyl phosphate synthetase (CPSase). CPSase catalyzes the formation of carbamoyl phosphate from the ammonia moiety of glutamine, carbonate, and phosphate donated by ATP, constituting the first step of 2 biosynthetic pathways, one leading to arginine and/or urea and the other to pyrimidine nucleotides. The large subunit (synthetase) binds the substrates ammonia (free or transferred from glutamine from the small subunit), hydrogencarbonate and ATP and carries out an ATP-coupled ligase reaction, activating hydrogencarbonate by forming carboxy phosphate which reacts with ammonia to form carbamoyl phosphate. This chain is Carbamoyl phosphate synthase large chain, found in Thermus thermophilus (strain ATCC 27634 / DSM 579 / HB8).